The following is a 1160-amino-acid chain: Major DNA-binding protein (1160 aa).

The Required for filament formation motif lies at 808–809 (FW). The interval 1139-1160 (ARGGEHAFDEDCGLLPAKRGRL) is required for nuclear localization.

This sequence belongs to the herpesviridae major DNA-binding protein family. Homooligomers. Forms double-helical filaments necessary for the formation of replication compartments within the host nucleus. Interacts with the origin-binding protein. Interacts with the helicase primase complex; this interaction stimulates primer synthesis activity of the helicase-primase complex. Interacts with the DNA polymerase. Interacts with the alkaline exonuclease; this interaction increases its nuclease processivity.

The protein resides in the host nucleus. Its function is as follows. Single-stranded DNA-binding protein required for DNA replication. In terms of biological role, plays several crucial roles in viral infection. Participates in the opening of the viral DNA origin to initiate replication by interacting with the origin-binding protein. May disrupt loops, hairpins and other secondary structures present on ssDNA to reduce and eliminate pausing of viral DNA polymerase at specific sites during elongation. Promotes viral DNA recombination by performing strand-transfer, characterized by the ability to transfer a DNA strand from a linear duplex to a complementary single-stranded DNA circle. Can also catalyze the renaturation of complementary single strands. Additionally, reorganizes the host cell nucleus, leading to the formation of prereplicative sites and replication compartments. This process is driven by the protein which can form double-helical filaments in the absence of DNA. This Simian cytomegalovirus (strain Colburn) protein is Major DNA-binding protein.